The primary structure comprises 273 residues: Terpene cyclase ascF (273 aa).

A run of 7 helical transmembrane segments spans residues 18–38 (VYEA…ILIA), 49–69 (MPLF…LWVV), 78–98 (MTIW…HGVL), 113–133 (ILVG…SWWI), 153–173 (YWAV…MLCV), 178–198 (GGVS…GLNM), and 217–237 (APAV…GFVL).

The protein belongs to the paxB family.

It is found in the membrane. The enzyme catalyses ilicicolin A epoxide = ilicicolin C. It functions in the pathway secondary metabolite biosynthesis; terpenoid biosynthesis. Terpene cyclase; part of the asc-1 gene cluster that mediates the biosynthesis of both ascochlorin and ascofuranone, a strong inhibitor of cyanide-insensitive alternative oxidases and a promising drug candidate against African trypanosomiasis. The first step in the pathway is performed by the non-reducing polyketide synthase ascC that produces orsellinic acid by condensing acetyl-CoA with 3 malonyl-CoA units. Orsellinic acid is then prenylated by the prenyltransferase ascA to yield ilicicolinic acid B. Ilicicolinic acid B is further reduced to ilicicolin B by the reductase ascB. The halogenase ascD then chlorinates ilicicolin B to produce ilicicolin A which is converted to ilicicolin A epoxide by the cytochrome P450 monooxygenase ascE that catalyzes stereoselective epoxidation of the terminal double bond of the prenyl group. Ilicicolin A epoxide is the last common precursor for the biosynthesis of ascofuranone and ascochlorin. The terpene cyclase ascF produces a monocyclic terpene, and the cyclization reaction is proposed to be initiated by protonation of the terminal epoxide of ilicicolin A epoxide to generate a monocyclic tertiarycation, which is followed by a series of hydride and methyl shifts with abstraction of proton, leading to the formation of the (14S,15R,19R)-trimethylcyclohexanone ring structure of ilicicolin C, which is finally reduced to ascochlorin by the dehydrogenase ascG. On the other hand, ilicicolin A epoxide is hydroxylated by the cytochrome P450 monooxygenase ascH, and the resultant product is cyclized by the terpene cyclase ascI to ascofuranol via protonation-initiated epoxide ring opening, which facilitates the 6-endo-tet cyclization to form the tetrahy-drofuran ring. Finally, ascofuranol is oxidized into ascofuranone by ascJ. The protein is Terpene cyclase ascF of Acremonium egyptiacum (Oospora egyptiaca).